Reading from the N-terminus, the 272-residue chain is Methyl-CpG-binding domain-containing protein 2 (272 aa).

A compositionally biased stretch (polar residues) spans 1–15 (MSMSQSRAVQRSSSP). The disordered stretch occupies residues 1–24 (MSMSQSRAVQRSSSPNEDRGENQL). The CW-type zinc finger occupies 53–112 (CPSIGAFTVQCASCFKWRLMPSMQKYEEIREQLLENPFFCDTAREWKPDISCDVPADIYQ). The MBD-associated domain (MAD) signature appears at 62 to 104 (QCASCFKWRLMPSMQKYEEIREQLLENPFFCDTAREWKPDISC). Zn(2+)-binding residues include cysteine 63, cysteine 66, cysteine 92, and cysteine 104. In terms of domain architecture, MBD spans 118-192 (WAIDKPNISR…SQFSFQIPKP (75 aa)). The segment covering 236–250 (LGTPTESGLNNSHYQ) has biased composition (polar residues). Residues 236 to 272 (LGTPTESGLNNSHYQPSKKKKTSTLSIFGSNDELADR) form a disordered region.

In terms of assembly, interacts (via MBD domain) with DDM1. As to expression, expressed in buds, flowers, stems, siliques and mature seeds.

Its subcellular location is the nucleus. In terms of biological role, probable transcriptional regulator. The polypeptide is Methyl-CpG-binding domain-containing protein 2 (MBD2) (Arabidopsis thaliana (Mouse-ear cress)).